A 240-amino-acid chain; its full sequence is UDP-2,3-diacylglucosamine hydrolase (240 aa).

Aspartate 8, histidine 10, aspartate 41, asparagine 79, and histidine 114 together coordinate Mn(2+). Substrate is bound at residue 79–80 (NR). Positions 122, 160, 164, 167, and 195 each coordinate substrate. Mn(2+) contacts are provided by histidine 195 and histidine 197.

Belongs to the LpxH family. Mn(2+) serves as cofactor.

The protein resides in the cell inner membrane. It catalyses the reaction UDP-2-N,3-O-bis[(3R)-3-hydroxytetradecanoyl]-alpha-D-glucosamine + H2O = 2-N,3-O-bis[(3R)-3-hydroxytetradecanoyl]-alpha-D-glucosaminyl 1-phosphate + UMP + 2 H(+). Its pathway is glycolipid biosynthesis; lipid IV(A) biosynthesis; lipid IV(A) from (3R)-3-hydroxytetradecanoyl-[acyl-carrier-protein] and UDP-N-acetyl-alpha-D-glucosamine: step 4/6. In terms of biological role, hydrolyzes the pyrophosphate bond of UDP-2,3-diacylglucosamine to yield 2,3-diacylglucosamine 1-phosphate (lipid X) and UMP by catalyzing the attack of water at the alpha-P atom. Involved in the biosynthesis of lipid A, a phosphorylated glycolipid that anchors the lipopolysaccharide to the outer membrane of the cell. This chain is UDP-2,3-diacylglucosamine hydrolase, found in Salmonella agona (strain SL483).